A 43-amino-acid polypeptide reads, in one-letter code: Protein PsbN (43 aa).

The helical transmembrane segment at 5–27 (TLVTIFISGSLVSFTGYALYTAF) threads the bilayer.

It belongs to the PsbN family.

It is found in the plastid. It localises to the chloroplast thylakoid membrane. Its function is as follows. May play a role in photosystem I and II biogenesis. The protein is Protein PsbN of Piper cenocladum (Ant piper).